Here is a 317-residue protein sequence, read N- to C-terminus: Lipoyl synthase (317 aa).

7 residues coordinate [4Fe-4S] cluster: C56, C61, C67, C82, C86, C89, and S298. Residues 68-287 (WEDREATFLI…KEEAEQIGFS (220 aa)) enclose the Radical SAM core domain.

The protein belongs to the radical SAM superfamily. Lipoyl synthase family. It depends on [4Fe-4S] cluster as a cofactor.

Its subcellular location is the cytoplasm. It catalyses the reaction [[Fe-S] cluster scaffold protein carrying a second [4Fe-4S](2+) cluster] + N(6)-octanoyl-L-lysyl-[protein] + 2 oxidized [2Fe-2S]-[ferredoxin] + 2 S-adenosyl-L-methionine + 4 H(+) = [[Fe-S] cluster scaffold protein] + N(6)-[(R)-dihydrolipoyl]-L-lysyl-[protein] + 4 Fe(3+) + 2 hydrogen sulfide + 2 5'-deoxyadenosine + 2 L-methionine + 2 reduced [2Fe-2S]-[ferredoxin]. The protein operates within protein modification; protein lipoylation via endogenous pathway; protein N(6)-(lipoyl)lysine from octanoyl-[acyl-carrier-protein]: step 2/2. Its function is as follows. Catalyzes the radical-mediated insertion of two sulfur atoms into the C-6 and C-8 positions of the octanoyl moiety bound to the lipoyl domains of lipoate-dependent enzymes, thereby converting the octanoylated domains into lipoylated derivatives. This is Lipoyl synthase from Streptomyces coelicolor (strain ATCC BAA-471 / A3(2) / M145).